Here is a 424-residue protein sequence, read N- to C-terminus: STAM-binding protein (424 aa).

The interaction with CHMP3 stretch occupies residues 1 to 127; that stretch reads MSDHADVSLP…YEQYKERKKK (127 aa). Residues serine 2 and serine 48 each carry the phosphoserine modification. Positions 227 to 231 are interaction with STAM; that stretch reads PAKPP. Serine 243 carries the post-translational modification Phosphoserine. An MPN domain is found at 257-388; the sequence is IVVPRNLCSE…LTDYGLQEIS (132 aa). Zn(2+) contacts are provided by histidine 335, histidine 337, aspartate 348, histidine 350, cysteine 390, histidine 396, and histidine 398. The JAMM motif motif lies at 335-348; sequence HTHPTQTAFLSSVD.

This sequence belongs to the peptidase M67C family. Interacts with STAM. Interacts with SMAD6 and SMAD7. Interacts with CHMP3; the interaction appears to relieve the autoinhibition of CHMP3. Interacts with SMURF2 and RNF11; this interaction promotes ubiquitination. Zn(2+) is required as a cofactor. In terms of processing, phosphorylated after BMP type I receptor activation. Post-translationally, ubiquitinated by SMURF2 in the presence of RNF11.

The protein localises to the nucleus. The protein resides in the membrane. Its subcellular location is the cytoplasm. It localises to the early endosome. With respect to regulation, inhibited by N-ethylmaleimide. Zinc metalloprotease that specifically cleaves 'Lys-63'-linked polyubiquitin chains. Does not cleave 'Lys-48'-linked polyubiquitin chains. Plays a role in signal transduction for cell growth and MYC induction mediated by IL-2 and GM-CSF. Potentiates BMP (bone morphogenetic protein) signaling by antagonizing the inhibitory action of SMAD6 and SMAD7. Has a key role in regulation of cell surface receptor-mediated endocytosis and ubiquitin-dependent sorting of receptors to lysosomes. Endosomal localization of STAMBP is required for efficient EGFR degradation but not for its internalization. Involved in the negative regulation of PI3K-AKT-mTOR and RAS-MAP signaling pathways. In Rattus norvegicus (Rat), this protein is STAM-binding protein (Stambp).